The following is a 159-amino-acid chain: NAD(P)H-quinone oxidoreductase subunit N (159 aa).

The protein belongs to the complex I NdhN subunit family. In terms of assembly, NDH-1 can be composed of about 15 different subunits; different subcomplexes with different compositions have been identified which probably have different functions.

The protein localises to the cell inner membrane. The enzyme catalyses a plastoquinone + NADH + (n+1) H(+)(in) = a plastoquinol + NAD(+) + n H(+)(out). It catalyses the reaction a plastoquinone + NADPH + (n+1) H(+)(in) = a plastoquinol + NADP(+) + n H(+)(out). Its function is as follows. NDH-1 shuttles electrons from an unknown electron donor, via FMN and iron-sulfur (Fe-S) centers, to quinones in the respiratory and/or the photosynthetic chain. The immediate electron acceptor for the enzyme in this species is believed to be plastoquinone. Couples the redox reaction to proton translocation, and thus conserves the redox energy in a proton gradient. Cyanobacterial NDH-1 also plays a role in inorganic carbon-concentration. This is NAD(P)H-quinone oxidoreductase subunit N from Gloeobacter violaceus (strain ATCC 29082 / PCC 7421).